Here is a 419-residue protein sequence, read N- to C-terminus: UPF0329 protein ECU07_1890/ECU10_0010 (419 aa).

Basic and acidic residues predominate over residues 136–165; sequence RQRKREEETERSVKELVGDEEKAKSKEEKA. Residues 136 to 222 are disordered; it reads RQRKREEETE…KGGKKKSKGG (87 aa). The span at 213-222 shows a compositional bias: basic residues; it reads KGGKKKSKGG.

The protein belongs to the UPF0329 family.

This chain is UPF0329 protein ECU07_1890/ECU10_0010, found in Encephalitozoon cuniculi (strain GB-M1) (Microsporidian parasite).